The chain runs to 461 residues: Bifunctional protein GlmU (461 aa).

The segment at 1 to 232 (MNLQIIILAA…SFEVQGINNR (232 aa)) is pyrophosphorylase. UDP-N-acetyl-alpha-D-glucosamine-binding positions include 8 to 11 (LAAG), Lys-22, Gln-73, and 78 to 79 (GT). Asp-102 contacts Mg(2+). Residues Gly-142, Glu-157, and Asn-230 each coordinate UDP-N-acetyl-alpha-D-glucosamine. Asn-230 contributes to the Mg(2+) binding site. The tract at residues 233–253 (QQLQQLERIWQQRAANQLMEK) is linker. The interval 254–461 (GATLADANRF…WKRPVKRERD (208 aa)) is N-acetyltransferase. The UDP-N-acetyl-alpha-D-glucosamine site is built by Arg-336 and Lys-354. His-366 functions as the Proton acceptor in the catalytic mechanism. UDP-N-acetyl-alpha-D-glucosamine contacts are provided by Tyr-369 and Asn-380. Acetyl-CoA contacts are provided by residues Ala-383, 389–390 (NY), Ser-408, and Ala-426.

In the N-terminal section; belongs to the N-acetylglucosamine-1-phosphate uridyltransferase family. It in the C-terminal section; belongs to the transferase hexapeptide repeat family. As to quaternary structure, homotrimer. The cofactor is Mg(2+).

It localises to the cytoplasm. The catalysed reaction is alpha-D-glucosamine 1-phosphate + acetyl-CoA = N-acetyl-alpha-D-glucosamine 1-phosphate + CoA + H(+). The enzyme catalyses N-acetyl-alpha-D-glucosamine 1-phosphate + UTP + H(+) = UDP-N-acetyl-alpha-D-glucosamine + diphosphate. Its pathway is nucleotide-sugar biosynthesis; UDP-N-acetyl-alpha-D-glucosamine biosynthesis; N-acetyl-alpha-D-glucosamine 1-phosphate from alpha-D-glucosamine 6-phosphate (route II): step 2/2. It functions in the pathway nucleotide-sugar biosynthesis; UDP-N-acetyl-alpha-D-glucosamine biosynthesis; UDP-N-acetyl-alpha-D-glucosamine from N-acetyl-alpha-D-glucosamine 1-phosphate: step 1/1. The protein operates within bacterial outer membrane biogenesis; LPS lipid A biosynthesis. In terms of biological role, catalyzes the last two sequential reactions in the de novo biosynthetic pathway for UDP-N-acetylglucosamine (UDP-GlcNAc). The C-terminal domain catalyzes the transfer of acetyl group from acetyl coenzyme A to glucosamine-1-phosphate (GlcN-1-P) to produce N-acetylglucosamine-1-phosphate (GlcNAc-1-P), which is converted into UDP-GlcNAc by the transfer of uridine 5-monophosphate (from uridine 5-triphosphate), a reaction catalyzed by the N-terminal domain. This chain is Bifunctional protein GlmU, found in Legionella pneumophila subsp. pneumophila (strain Philadelphia 1 / ATCC 33152 / DSM 7513).